We begin with the raw amino-acid sequence, 793 residues long: Protein translocase subunit SecA 2 (793 aa).

Residues Q77, 95–99 (GEGKT), and D493 contribute to the ATP site.

It belongs to the SecA family. In terms of assembly, monomer and homodimer. Part of the essential Sec protein translocation apparatus which comprises SecA, SecYEG and auxiliary proteins SecDF. Other proteins may also be involved.

It localises to the cell membrane. The protein localises to the cytoplasm. The catalysed reaction is ATP + H2O + cellular proteinSide 1 = ADP + phosphate + cellular proteinSide 2.. Its function is as follows. Part of the Sec protein translocase complex. Interacts with the SecYEG preprotein conducting channel. Has a central role in coupling the hydrolysis of ATP to the transfer of proteins into and across the cell membrane, serving as an ATP-driven molecular motor driving the stepwise translocation of polypeptide chains across the membrane. This chain is Protein translocase subunit SecA 2, found in Streptococcus sanguinis (strain SK36).